Consider the following 147-residue polypeptide: Small ribosomal subunit protein uS5 (147 aa).

An S5 DRBM domain is found at 9–72 (FEEVIVDIGR…DDAFKNIIHV (64 aa)).

It belongs to the universal ribosomal protein uS5 family. As to quaternary structure, part of the 30S ribosomal subunit. Contacts proteins S4 and S8.

With S4 and S12 plays an important role in translational accuracy. Functionally, located at the back of the 30S subunit body where it stabilizes the conformation of the head with respect to the body. The sequence is that of Small ribosomal subunit protein uS5 from Campylobacter concisus (strain 13826).